The following is a 678-amino-acid chain: SPS-sensor component PTR3 (678 aa).

Disordered regions lie at residues 111 to 158 and 179 to 211; these read TGQG…SDPT and ANTE…SSLL. Over residues 127-144 the composition is skewed to low complexity; it reads TSPSSSSLSLTPSRSSST. Over residues 149 to 158 the composition is skewed to basic and acidic residues; sequence ADNKTLSDPT. Over residues 179–194 the composition is skewed to polar residues; sequence ANTEVGSDHPLTTGTT.

Homodimer. Component of the plasma membrane SPS (SSY1-PTR3-SSY5) amino acid sensor complex. Interacts directly with SSY1 and SSY5. Post-translationally, hyperphosphorylated in response to extracellular amino acids and dependent on the amino acid sensor component SSY1. Phosphorylation is positively regulated by casein kinases YCK1 and YCK2, and negatively regulated by phosphatase PP2A regulatory subunit RTS1.

The protein resides in the cell membrane. Functionally, component of the SPS-sensor system, which regulates the expression of several amino acid-metabolizing enzymes and amino acid- and peptide-permeases in response to extracellular amino acid levels by controlling the activity of two transcription factors, STP1 and STP2. This chain is SPS-sensor component PTR3 (PTR3), found in Saccharomyces cerevisiae (strain ATCC 204508 / S288c) (Baker's yeast).